Here is a 184-residue protein sequence, read N- to C-terminus: FMRFamide-related peptides (184 aa).

Residues 1-44 (MLVSSSVLKDDSSLRIFKESPNEFEYIIKRHDMDDRKEDTESKE) constitute a propeptide that is removed on maturation. Phe-56 carries the post-translational modification Phenylalanine amide. A propeptide spanning residues 59 to 83 (GQSFFNNLDNSAFDNEIDSKVSRHP) is cleaved from the precursor. Residue Phe-94 is modified to Phenylalanine amide. The propeptide occupies 97-107 (SGMKSTNDEQP). A Phenylalanine amide modification is found at Phe-119. The propeptide occupies 122–184 (NIQIVPTDFD…SLETNSNHRE (63 aa)).

Belongs to the FARP (FMRFamide related peptide) family. In terms of tissue distribution, expressed throughout the central nervous system.

The protein resides in the secreted. In insects, FMRFamide and related peptides have modulatory actions at skeletal neuromuscular junctions, and peptides that are immunologically related to FMRFamide are released into the circulation from neurohemal organs. The protein is FMRFamide-related peptides of Camponotus floridanus (Florida carpenter ant).